Here is a 152-residue protein sequence, read N- to C-terminus: Protein-export protein SecB (152 aa).

The protein belongs to the SecB family. Homotetramer, a dimer of dimers. One homotetramer interacts with 1 SecA dimer.

It localises to the cytoplasm. Functionally, one of the proteins required for the normal export of preproteins out of the cell cytoplasm. It is a molecular chaperone that binds to a subset of precursor proteins, maintaining them in a translocation-competent state. It also specifically binds to its receptor SecA. The sequence is that of Protein-export protein SecB from Rickettsia bellii (strain RML369-C).